The sequence spans 379 residues: Cytochrome b (379 aa).

4 helical membrane passes run 33 to 53 (FGSL…FLAM), 77 to 98 (WLIR…FIHV), 113 to 133 (WNIG…GYVL), and 178 to 198 (FFAF…VHLL). Heme b contacts are provided by histidine 83 and histidine 97. Residues histidine 182 and histidine 196 each coordinate heme b. Position 201 (histidine 201) interacts with a ubiquinone. 4 helical membrane passes run 226–246 (IKDL…ALFF), 288–308 (LGGV…PLLN), 320–340 (ITQT…WIGG), and 347–367 (FTMI…ILMP).

The protein belongs to the cytochrome b family. In terms of assembly, the cytochrome bc1 complex contains 11 subunits: 3 respiratory subunits (MT-CYB, CYC1 and UQCRFS1), 2 core proteins (UQCRC1 and UQCRC2) and 6 low-molecular weight proteins (UQCRH/QCR6, UQCRB/QCR7, UQCRQ/QCR8, UQCR10/QCR9, UQCR11/QCR10 and a cleavage product of UQCRFS1). This cytochrome bc1 complex then forms a dimer. Heme b serves as cofactor.

The protein resides in the mitochondrion inner membrane. Its function is as follows. Component of the ubiquinol-cytochrome c reductase complex (complex III or cytochrome b-c1 complex) that is part of the mitochondrial respiratory chain. The b-c1 complex mediates electron transfer from ubiquinol to cytochrome c. Contributes to the generation of a proton gradient across the mitochondrial membrane that is then used for ATP synthesis. The chain is Cytochrome b (MT-CYB) from Akodon dolores (Dolorous grass mouse).